The primary structure comprises 271 residues: MPELPEVEVTRQGIAPHLEGNRVEALIVRNANLRWPVPELAQNIVGQTILGVRRRAKYLLIDTQAGTTIVHLGMSGSLRVLPKNTPVEKHDHIDLVMQNGRVLRFNDPRRFGAWLWSELPEAAHPLLEKLGPEPLSAAFHADYLQAALKGKKKAIKLCLMDNAIVVGVGNIYANEALFAAGIHPEAEAGKVDAERLTLLTAEVKTILTQAIKQGGTTLKDFTNADGKPGYFAQKLHVYGRGGETCTECGHLLSEIRLGQRTTVFCSLCQTK.

The Schiff-base intermediate with DNA role is filled by P2. Catalysis depends on E3, which acts as the Proton donor. K57 acts as the Proton donor; for beta-elimination activity in catalysis. DNA-binding residues include H90, R109, and K151. Residues 236-270 (HVYGRGGETCTECGHLLSEIRLGQRTTVFCSLCQT) form an FPG-type zinc finger. Catalysis depends on R260, which acts as the Proton donor; for delta-elimination activity.

The protein belongs to the FPG family. Monomer. Requires Zn(2+) as cofactor.

The enzyme catalyses Hydrolysis of DNA containing ring-opened 7-methylguanine residues, releasing 2,6-diamino-4-hydroxy-5-(N-methyl)formamidopyrimidine.. It catalyses the reaction 2'-deoxyribonucleotide-(2'-deoxyribose 5'-phosphate)-2'-deoxyribonucleotide-DNA = a 3'-end 2'-deoxyribonucleotide-(2,3-dehydro-2,3-deoxyribose 5'-phosphate)-DNA + a 5'-end 5'-phospho-2'-deoxyribonucleoside-DNA + H(+). Functionally, involved in base excision repair of DNA damaged by oxidation or by mutagenic agents. Acts as a DNA glycosylase that recognizes and removes damaged bases. Has a preference for oxidized purines, such as 7,8-dihydro-8-oxoguanine (8-oxoG). Has AP (apurinic/apyrimidinic) lyase activity and introduces nicks in the DNA strand. Cleaves the DNA backbone by beta-delta elimination to generate a single-strand break at the site of the removed base with both 3'- and 5'-phosphates. The polypeptide is Formamidopyrimidine-DNA glycosylase (Shewanella amazonensis (strain ATCC BAA-1098 / SB2B)).